The sequence spans 206 residues: Cytochrome c biogenesis ATP-binding export protein CcmA (206 aa).

One can recognise an ABC transporter domain in the interval 3–206 (VSVDDLCVTR…LAGASDEAFL (204 aa)). 35–42 (GPNGSGKT) is an ATP binding site.

Belongs to the ABC transporter superfamily. CcmA exporter (TC 3.A.1.107) family. The complex is composed of two ATP-binding proteins (CcmA) and two transmembrane proteins (CcmB).

The protein resides in the cell inner membrane. The enzyme catalyses heme b(in) + ATP + H2O = heme b(out) + ADP + phosphate + H(+). Functionally, part of the ABC transporter complex CcmAB involved in the biogenesis of c-type cytochromes; once thought to export heme, this seems not to be the case, but its exact role is uncertain. Responsible for energy coupling to the transport system. This Roseobacter denitrificans (strain ATCC 33942 / OCh 114) (Erythrobacter sp. (strain OCh 114)) protein is Cytochrome c biogenesis ATP-binding export protein CcmA.